A 190-amino-acid chain; its full sequence is Somatotropin (190 aa).

His19 contributes to the Zn(2+) binding site. A disulfide bond links Cys52 and Cys163. The residue at position 105 (Ser105) is a Phosphoserine. Glu172 lines the Zn(2+) pocket. Cys180 and Cys188 are joined by a disulfide.

The protein belongs to the somatotropin/prolactin family.

It localises to the secreted. Its function is as follows. Plays an important role in growth control. Its major role in stimulating body growth is to stimulate the liver and other tissues to secrete IGF1. It stimulates both the differentiation and proliferation of myoblasts. It also stimulates amino acid uptake and protein synthesis in muscle and other tissues. The polypeptide is Somatotropin (GH1) (Vulpes vulpes (Red fox)).